The chain runs to 97 residues: DNA-binding protein HU (97 aa).

It belongs to the bacterial histone-like protein family. Has been isolated in complexes with 5S rRNA and bL25, and with 5S rRNA, bL25 and uL5. Homodimer.

Functionally, histone-like DNA-binding protein which is capable of wrapping DNA to stabilize it, and thus to prevent its denaturation under extreme environmental conditions. The chain is DNA-binding protein HU from Thermus thermophilus (strain ATCC 27634 / DSM 579 / HB8).